The sequence spans 122 residues: Small ribosomal subunit protein uS13 (122 aa).

Positions R93–K122 are disordered. The segment covering A107 to K122 has biased composition (basic residues).

It belongs to the universal ribosomal protein uS13 family. In terms of assembly, part of the 30S ribosomal subunit. Forms a loose heterodimer with protein S19. Forms two bridges to the 50S subunit in the 70S ribosome.

Located at the top of the head of the 30S subunit, it contacts several helices of the 16S rRNA. In the 70S ribosome it contacts the 23S rRNA (bridge B1a) and protein L5 of the 50S subunit (bridge B1b), connecting the 2 subunits; these bridges are implicated in subunit movement. Contacts the tRNAs in the A and P-sites. The polypeptide is Small ribosomal subunit protein uS13 (Syntrophomonas wolfei subsp. wolfei (strain DSM 2245B / Goettingen)).